Here is a 242-residue protein sequence, read N- to C-terminus: Protein HTATIP2 (242 aa).

A2 carries the post-translational modification N-acetylalanine. The interval 2–25 is required for interaction with elongation factor EEF1A1; that stretch reads AETEALSKLREDFRMQNKSVFILG. Residues S27, G28, E29, T30, R52, R53, L92, G93, Y143, K147, L170, and R178 each contribute to the NADPH site. Residue Y143 is the Proton acceptor of the active site. K147 is an active-site residue.

Monomer. Forms homodimers during oxidative stress. Interacts (via N-terminus) with elongation factor EEF1A1 (via middle-region); the interaction is direct and competes with EEF1A1 binding to guanyl-nucleotide exchange factor EEF1B2, thereby inhibiting GDP for GTP exchange and reactivation of EEF1A1. Interacts with nuclear transport receptors XPO4, IPO5/RANBP5, IPO7, IPO9 and KPNB1 as well as GCN1L1/GCN1 and LRPPRC probably through their HEAT repeats. Binds NCOA5/CIA.

The protein resides in the cytoplasm. In terms of biological role, represses translation by preventing reactivation of elongation factor eEF1A. May also inhibit nuclear import by competing with nuclear import substrates for binding to a subset of nuclear transport receptors. Has additionally been proposed to act as a redox sensor involved in cellular oxidative stress surveillance. The sequence is that of Protein HTATIP2 (HTATIP2) from Gorilla gorilla gorilla (Western lowland gorilla).